The following is a 123-amino-acid chain: Large ribosomal subunit protein bL19 (123 aa).

It belongs to the bacterial ribosomal protein bL19 family.

This protein is located at the 30S-50S ribosomal subunit interface and may play a role in the structure and function of the aminoacyl-tRNA binding site. This chain is Large ribosomal subunit protein bL19, found in Thermomicrobium roseum (strain ATCC 27502 / DSM 5159 / P-2).